The following is a 107-amino-acid chain: MKYLAAYALVGLSGGTPSKSAVEAVLKAAGVPVDPSRVDALFAEFAGKDFDTVCTEGKSKLVGGVTRPNAATASAPTAAAAASSGAAAPAAAAEEEEDDDMGFGLFD.

Positions 85–107 are disordered; that stretch reads GAAAPAAAAEEEEDDDMGFGLFD.

It belongs to the eukaryotic ribosomal protein P1/P2 family. In terms of assembly, P1 and P2 exist as dimers at the large ribosomal subunit. Post-translationally, phosphorylated.

Functionally, plays an important role in the elongation step of protein synthesis. The sequence is that of Large ribosomal subunit protein P2-A from Trypanosoma cruzi.